The following is a 453-amino-acid chain: Bifunctional protein GlmU (453 aa).

The segment at 1-226 (MSFSAVILAA…PIEVEGVNNR (226 aa)) is pyrophosphorylase. Residues 8 to 11 (LAAG), lysine 22, glutamine 73, 78 to 79 (GT), 100 to 102 (YGD), glycine 137, glutamate 151, asparagine 166, and asparagine 224 each bind UDP-N-acetyl-alpha-D-glucosamine. A Mg(2+)-binding site is contributed by aspartate 102. Position 224 (asparagine 224) interacts with Mg(2+). A linker region spans residues 227–247 (IQLARLERAYQAMQAERLLEQ). Positions 248–453 (GVMLRDPSRF…KGWKRPVKQK (206 aa)) are N-acetyltransferase. The UDP-N-acetyl-alpha-D-glucosamine site is built by arginine 330 and lysine 348. Histidine 360 serves as the catalytic Proton acceptor. UDP-N-acetyl-alpha-D-glucosamine is bound by residues tyrosine 363 and asparagine 374. Residues alanine 377, 383–384 (NY), serine 402, alanine 420, and arginine 437 each bind acetyl-CoA.

It in the N-terminal section; belongs to the N-acetylglucosamine-1-phosphate uridyltransferase family. The protein in the C-terminal section; belongs to the transferase hexapeptide repeat family. As to quaternary structure, homotrimer. The cofactor is Mg(2+).

The protein resides in the cytoplasm. The catalysed reaction is alpha-D-glucosamine 1-phosphate + acetyl-CoA = N-acetyl-alpha-D-glucosamine 1-phosphate + CoA + H(+). It carries out the reaction N-acetyl-alpha-D-glucosamine 1-phosphate + UTP + H(+) = UDP-N-acetyl-alpha-D-glucosamine + diphosphate. The protein operates within nucleotide-sugar biosynthesis; UDP-N-acetyl-alpha-D-glucosamine biosynthesis; N-acetyl-alpha-D-glucosamine 1-phosphate from alpha-D-glucosamine 6-phosphate (route II): step 2/2. Its pathway is nucleotide-sugar biosynthesis; UDP-N-acetyl-alpha-D-glucosamine biosynthesis; UDP-N-acetyl-alpha-D-glucosamine from N-acetyl-alpha-D-glucosamine 1-phosphate: step 1/1. It participates in bacterial outer membrane biogenesis; LPS lipid A biosynthesis. Its function is as follows. Catalyzes the last two sequential reactions in the de novo biosynthetic pathway for UDP-N-acetylglucosamine (UDP-GlcNAc). The C-terminal domain catalyzes the transfer of acetyl group from acetyl coenzyme A to glucosamine-1-phosphate (GlcN-1-P) to produce N-acetylglucosamine-1-phosphate (GlcNAc-1-P), which is converted into UDP-GlcNAc by the transfer of uridine 5-monophosphate (from uridine 5-triphosphate), a reaction catalyzed by the N-terminal domain. This is Bifunctional protein GlmU from Photobacterium profundum (strain SS9).